Consider the following 369-residue polypeptide: 4-hydroxy-3-methylbut-2-en-1-yl diphosphate synthase (flavodoxin) (369 aa).

Residues Cys-270, Cys-273, Cys-305, and Glu-312 each contribute to the [4Fe-4S] cluster site.

The protein belongs to the IspG family. [4Fe-4S] cluster is required as a cofactor.

The enzyme catalyses (2E)-4-hydroxy-3-methylbut-2-enyl diphosphate + oxidized [flavodoxin] + H2O + 2 H(+) = 2-C-methyl-D-erythritol 2,4-cyclic diphosphate + reduced [flavodoxin]. Its pathway is isoprenoid biosynthesis; isopentenyl diphosphate biosynthesis via DXP pathway; isopentenyl diphosphate from 1-deoxy-D-xylulose 5-phosphate: step 5/6. In terms of biological role, converts 2C-methyl-D-erythritol 2,4-cyclodiphosphate (ME-2,4cPP) into 1-hydroxy-2-methyl-2-(E)-butenyl 4-diphosphate. This Pseudomonas putida (strain ATCC 47054 / DSM 6125 / CFBP 8728 / NCIMB 11950 / KT2440) protein is 4-hydroxy-3-methylbut-2-en-1-yl diphosphate synthase (flavodoxin).